The primary structure comprises 107 residues: Nucleoid-associated protein Atu0095 (107 aa).

The tract at residues 81-107 (KGEAQAQEKMADLTAGLPLPPGMKLPF) is disordered. Residues 98-107 (PLPPGMKLPF) are compositionally biased toward pro residues.

It belongs to the YbaB/EbfC family. As to quaternary structure, homodimer.

Its subcellular location is the cytoplasm. It localises to the nucleoid. Functionally, binds to DNA and alters its conformation. May be involved in regulation of gene expression, nucleoid organization and DNA protection. The polypeptide is Nucleoid-associated protein Atu0095 (Agrobacterium fabrum (strain C58 / ATCC 33970) (Agrobacterium tumefaciens (strain C58))).